Reading from the N-terminus, the 215-residue chain is KID-containing protein 1 (215 aa).

Disordered regions lie at residues 1-132 and 150-183; these read MAGG…NKKR and NPKSMPLLPVHEDNDDEEGDDGDLSDEERGGDVL. Residues 64 to 81 show a composition bias toward acidic residues; the sequence is DSEEEDEESEEDNDEEEL. The Nuclear localization signal motif lies at 129 to 137; it reads NKKRRLQIY. Residues 162 to 175 are compositionally biased toward acidic residues; sequence DNDDEEGDDGDLSD. The segment at 177–204 is kinase-inducible domain (KID); it reads ERGGDVLARRPSFKNRALKSMSCFALSD. Ser188 bears the Phosphoserine; by PKA mark.

In terms of assembly, interacts with HDA19; Ser-188 is critical for this interaction. In terms of tissue distribution, strongly expressed in stems, flowers, roots and immature siliques, but not detected in leaf blades of seedlings.

It is found in the nucleus. In terms of biological role, transcription activator which may regulates gene expression through interaction with the histone deacetylase HDA19. The chain is KID-containing protein 1 from Brassica napus (Rape).